Reading from the N-terminus, the 95-residue chain is Aspartyl/glutamyl-tRNA(Asn/Gln) amidotransferase subunit C (95 aa).

It belongs to the GatC family. As to quaternary structure, heterotrimer of A, B and C subunits.

It carries out the reaction L-glutamyl-tRNA(Gln) + L-glutamine + ATP + H2O = L-glutaminyl-tRNA(Gln) + L-glutamate + ADP + phosphate + H(+). It catalyses the reaction L-aspartyl-tRNA(Asn) + L-glutamine + ATP + H2O = L-asparaginyl-tRNA(Asn) + L-glutamate + ADP + phosphate + 2 H(+). Allows the formation of correctly charged Asn-tRNA(Asn) or Gln-tRNA(Gln) through the transamidation of misacylated Asp-tRNA(Asn) or Glu-tRNA(Gln) in organisms which lack either or both of asparaginyl-tRNA or glutaminyl-tRNA synthetases. The reaction takes place in the presence of glutamine and ATP through an activated phospho-Asp-tRNA(Asn) or phospho-Glu-tRNA(Gln). This is Aspartyl/glutamyl-tRNA(Asn/Gln) amidotransferase subunit C from Rhizobium johnstonii (strain DSM 114642 / LMG 32736 / 3841) (Rhizobium leguminosarum bv. viciae).